The following is a 387-amino-acid chain: MLSIRRHAKTVASSCTNLTQKRTYVDVYMKWKRDPYFDNIEHILRSSQLKSVVSLKNCIVQEPNRCIPISAISKKTRQFDVSTKIAHFLRKFPSIFEEFVGPEYNLPWFRLTPEATELDRQERVVYQTSADDLRDRLKKLILMSKDNVLPLSIVQGMKWYLGLPDDYLQFPDMNLDSSFRFVDMEDGVKGLAVDYNGGDKVLSVLQKNAMKKRRGEVSLEEIEFPLFPSKGCRLRVKIEDWLMEFQKLPYVSPYDDYSCLDPSSDIAEKRVVGFLHELLCLFVEHSAERKKLLCLKKHFGLPQKVHKAFERHPQIFYLSMKNKTCTAILREPYRDKASVETHPVLGVRKKYIQLMKNSELILKSRRNSFGFRDEGVVDKDLDLDFEG.

The transit peptide at 1 to 24 (MLSIRRHAKTVASSCTNLTQKRTY) directs the protein to the mitochondrion. The 327-residue stretch at 32 to 358 (KRDPYFDNIE…KKYIQLMKNS (327 aa)) folds into the PORR domain.

The protein resides in the mitochondrion. RNA-binding protein involved in group II intron splicing. Binds specific group II introns and promotes their splicing (e.g. rpl2 and ccmFC). In Arabidopsis thaliana (Mouse-ear cress), this protein is Protein WHAT'S THIS FACTOR 9, mitochondrial.